The sequence spans 387 residues: 3-ketoacyl-CoA thiolase (387 aa).

Catalysis depends on cysteine 91, which acts as the Acyl-thioester intermediate. Catalysis depends on proton acceptor residues histidine 343 and cysteine 373.

The protein belongs to the thiolase-like superfamily. Thiolase family. In terms of assembly, heterotetramer of two alpha chains (FadB) and two beta chains (FadA).

Its subcellular location is the cytoplasm. It catalyses the reaction an acyl-CoA + acetyl-CoA = a 3-oxoacyl-CoA + CoA. Its pathway is lipid metabolism; fatty acid beta-oxidation. Catalyzes the final step of fatty acid oxidation in which acetyl-CoA is released and the CoA ester of a fatty acid two carbons shorter is formed. In Vibrio cholerae serotype O1 (strain ATCC 39315 / El Tor Inaba N16961), this protein is 3-ketoacyl-CoA thiolase.